The primary structure comprises 443 residues: EGF-containing fibulin-like extracellular matrix protein 2 (443 aa).

Residues 1-27 (MLPFASCLPGSLLLWAFLLLLLGAASP) form the signal peptide. Gln-28 carries the pyrrolidone carboxylic acid modification. The EGF-like 1; atypical domain occupies 36-81 (YTECTDGYEWDADSQHCRDVNECLTIPEACKGEMKCINHYGGYLCL). Disulfide bonds link Cys-58–Cys-121, Cys-65–Cys-80, Cys-71–Cys-109, Cys-127–Cys-140, Cys-134–Cys-149, Cys-151–Cys-162, Cys-168–Cys-177, Cys-173–Cys-186, Cys-188–Cys-201, Cys-207–Cys-217, Cys-213–Cys-226, Cys-228–Cys-241, Cys-247–Cys-258, Cys-254–Cys-267, Cys-269–Cys-281, Cys-287–Cys-300, Cys-294–Cys-309, and Cys-315–Cys-327. The interval 91–117 (LHGEGPPPPAAHAQQPNPCPQGYEPDE) is disordered. Residues 123–163 (DVDECTQALHDCRPSQDCHNLPGSYQCTCPDGYRKIGPECV) form the EGF-like 2; calcium-binding domain. Positions 164 to 202 (DIDECRYRYCQHRCVNLPGSFRCQCEPGFQLGPNNRSCV) constitute an EGF-like 3; calcium-binding domain. The N-linked (GlcNAc...) asparagine glycan is linked to Asn-198. In terms of domain architecture, EGF-like 4; calcium-binding spans 203–242 (DVNECDMGAPCEQRCFNSYGTFLCRCNQGYELHRDGFSCS). In terms of domain architecture, EGF-like 5; calcium-binding spans 243-282 (DIDECGYSSYLCQYRCVNEPGRFSCHCPQGYQLLATRLCQ). Residues 283 to 328 (DIDECETGAHQCSEAQTCVNFHGGYRCVDTNRCVEPYVQVSDNRCL) form the EGF-like 6; calcium-binding domain. Asn-394 carries N-linked (GlcNAc...) asparagine glycosylation.

This sequence belongs to the fibulin family. In terms of assembly, homodimer; disulfide-linked. Multimer; allows heparin binding. Monomer. Binds preferentially to p53 mutants. Interacts with FBN1 (via N-terminal domain); this interaction inhibits EFEMP2 binding to LOX and ELN. Interacts with ELN with moderate affinity; this interaction regulates ELN self-assembly maturation stage. Interacts with PCOLCE. Interacts with collagen type IV trimer (COL4A1-COL4A1-COL4A2), NID2 and moderately with COL15A1-derived endostatin. Interacts with EMILIN1; this interaction promotes the incorporation of EFEMP2 into the extracellular matrix. Interacts with LTBP4; the LTBP4 long form (LTBP4L) has a stronger binding affinity than the LTBP4 short form and the LTBP4 long form promotes fibrillar deposition of EFEMP2. Interacts with LOX (via propeptide); this interaction is strong and facilitates formation of ternary complexes with ELN during elastic fiber assembly; this interaction limits interaction of EFEMP2 with FBLN5. Interacts with PITX2. Interacts with FBLN5 with moderate affinity. Interacts with LOXL1 (via propeptide), LTBP1 and TGFB1 stronger than with LOXL2 and LTBP3. Post-translationally, N-glycosylated; contains mostly complex-type glycans. Not O-glycosylated. Cleaved by ELANE; produces a 50-55 kDa fragment. Cleaved by MMP2 and MMP9; produces several fragments. In terms of tissue distribution, expressed in elastic fibers of the skin, near the dermal-epidermal junction, surrounding the hair follicles and throughout the dermis. Expressed in tendon around tenocytes. Prominently expressed in cartilage, bone, perichondrium and ligaments. Also detected in bone marrow stroma. Expressed in aorta, lung, and esophagus.

It is found in the secreted. The protein resides in the extracellular space. The protein localises to the extracellular matrix. It localises to the basement membrane. Plays a crucial role in elastic fiber formation in tissue, and in the formation of ultrastructural connections between elastic laminae and smooth muscle cells in the aorta, therefore participates in terminal differentiation and maturation of smooth muscle cell (SMC) and in the mechanical properties and wall integrity maintenance of the aorta. In addition, is involved in the control of collagen fibril assembly in tissue throught proteolytic activation of LOX leading to cross- linking of collagen and elastin. Also promotes ELN coacervation and participates in the deposition of ELN coacervates on to microfibrils but also regulates ELN cross- linking through LOX interaction. Moreover adheres to the cells through heparin binding in a calcium-dependent manner and regulates vascularlar smooth muscle cells proliferation through angiotensin signaling. The polypeptide is EGF-containing fibulin-like extracellular matrix protein 2 (Mus musculus (Mouse)).